The chain runs to 570 residues: Urease subunit alpha 1 (570 aa).

Residues 131–570 (GGIDTHVHFI…VPMAQRYFLF (440 aa)) enclose the Urease domain. Residues His136, His138, and Lys219 each coordinate Ni(2+). At Lys219 the chain carries N6-carboxylysine. His221 provides a ligand contact to substrate. Ni(2+) is bound by residues His248 and His274. The Proton donor role is filled by His322. Residue Asp362 coordinates Ni(2+).

This sequence belongs to the metallo-dependent hydrolases superfamily. Urease alpha subunit family. As to quaternary structure, heterotrimer of UreA (gamma), UreB (beta) and UreC (alpha) subunits. Three heterotrimers associate to form the active enzyme. The cofactor is Ni cation. Carboxylation allows a single lysine to coordinate two nickel ions.

The protein localises to the cytoplasm. The catalysed reaction is urea + 2 H2O + H(+) = hydrogencarbonate + 2 NH4(+). It functions in the pathway nitrogen metabolism; urea degradation; CO(2) and NH(3) from urea (urease route): step 1/1. This is Urease subunit alpha 1 from Brucella melitensis biotype 1 (strain ATCC 23456 / CCUG 17765 / NCTC 10094 / 16M).